The sequence spans 507 residues: ATP synthase subunit alpha, chloroplastic (507 aa).

Residue 170–177 (GDRQTGKT) coordinates ATP.

It belongs to the ATPase alpha/beta chains family. As to quaternary structure, F-type ATPases have 2 components, CF(1) - the catalytic core - and CF(0) - the membrane proton channel. CF(1) has five subunits: alpha(3), beta(3), gamma(1), delta(1), epsilon(1). CF(0) has four main subunits: a, b, b' and c.

Its subcellular location is the plastid. The protein resides in the chloroplast thylakoid membrane. It carries out the reaction ATP + H2O + 4 H(+)(in) = ADP + phosphate + 5 H(+)(out). Produces ATP from ADP in the presence of a proton gradient across the membrane. The alpha chain is a regulatory subunit. This is ATP synthase subunit alpha, chloroplastic from Spinacia oleracea (Spinach).